We begin with the raw amino-acid sequence, 347 residues long: Ryncolin-2 (347 aa).

The signal sequence occupies residues 1–19; sequence MKPWAAFHLIFLVASSLEG. The disordered stretch occupies residues 49–115; it reads LQSQPGIPGI…DKGDKGDKGD (67 aa). The region spanning 57 to 114 is the Collagen-like domain; that stretch reads GIPGVPGINGSEGLKGDPGPQGLPGETGFDGIPGVAGPKGDKGDQGDKGDKGDKGDKG. A compositionally biased stretch (basic and acidic residues) spans 95 to 115; that stretch reads KGDKGDQGDKGDKGDKGDKGD. One can recognise a Fibrinogen C-terminal domain in the interval 121-341; sequence DCPPTDVEVR…YADMKIRPQQ (221 aa). Disulfide bonds link C132–C160 and C284–C297.

It belongs to the ficolin lectin family. Veficolin subfamily. Hydroxylated, possibly at Pro-74 and Pro-94. In terms of tissue distribution, expressed by the venom duct.

Its subcellular location is the secreted. Initiates complement activation and/or interferes in platelet aggregation and/or blood coagulation. The polypeptide is Ryncolin-2 (Cerberus rynchops (Dog-faced water snake)).